The chain runs to 179 residues: Large ribosomal subunit protein uL6 (179 aa).

Belongs to the universal ribosomal protein uL6 family. In terms of assembly, part of the 50S ribosomal subunit.

In terms of biological role, this protein binds to the 23S rRNA, and is important in its secondary structure. It is located near the subunit interface in the base of the L7/L12 stalk, and near the tRNA binding site of the peptidyltransferase center. The sequence is that of Large ribosomal subunit protein uL6 from Rhodococcus opacus (strain B4).